A 483-amino-acid polypeptide reads, in one-letter code: Glutamyl-tRNA(Gln) amidotransferase subunit A (483 aa).

Residues K77 and S152 each act as charge relay system in the active site. S176 serves as the catalytic Acyl-ester intermediate.

This sequence belongs to the amidase family. GatA subfamily. In terms of assembly, heterotrimer of A, B and C subunits.

It carries out the reaction L-glutamyl-tRNA(Gln) + L-glutamine + ATP + H2O = L-glutaminyl-tRNA(Gln) + L-glutamate + ADP + phosphate + H(+). Allows the formation of correctly charged Gln-tRNA(Gln) through the transamidation of misacylated Glu-tRNA(Gln) in organisms which lack glutaminyl-tRNA synthetase. The reaction takes place in the presence of glutamine and ATP through an activated gamma-phospho-Glu-tRNA(Gln). The polypeptide is Glutamyl-tRNA(Gln) amidotransferase subunit A (Shouchella clausii (strain KSM-K16) (Alkalihalobacillus clausii)).